Reading from the N-terminus, the 132-residue chain is Small ribosomal subunit protein uS8c (132 aa).

It belongs to the universal ribosomal protein uS8 family. In terms of assembly, part of the 30S ribosomal subunit.

It localises to the plastid. The protein localises to the chloroplast. Its function is as follows. One of the primary rRNA binding proteins, it binds directly to 16S rRNA central domain where it helps coordinate assembly of the platform of the 30S subunit. The protein is Small ribosomal subunit protein uS8c (rps8) of Angiopteris evecta (Mule's foot fern).